Consider the following 195-residue polypeptide: FMN-dependent NADH:quinone oxidoreductase 2 (195 aa).

FMN contacts are provided by residues S16–S18 and M85–L88.

Belongs to the azoreductase type 1 family. As to quaternary structure, homodimer. Requires FMN as cofactor.

The enzyme catalyses 2 a quinone + NADH + H(+) = 2 a 1,4-benzosemiquinone + NAD(+). It carries out the reaction N,N-dimethyl-1,4-phenylenediamine + anthranilate + 2 NAD(+) = 2-(4-dimethylaminophenyl)diazenylbenzoate + 2 NADH + 2 H(+). Functionally, quinone reductase that provides resistance to thiol-specific stress caused by electrophilic quinones. Also exhibits azoreductase activity. Catalyzes the reductive cleavage of the azo bond in aromatic azo compounds to the corresponding amines. In Photobacterium profundum (strain SS9), this protein is FMN-dependent NADH:quinone oxidoreductase 2.